Consider the following 172-residue polypeptide: RNA silencing suppressor p19 (172 aa).

Residues methionine 1–aspartate 20 show a composition bias toward basic and acidic residues. A disordered region spans residues methionine 1–serine 38.

Belongs to the tombusvirus protein p19 family. Homodimer.

Viral suppressor of RNA silencing which binds specifically to silencing RNAs (siRNAs). Acts as a molecular caliper to specifically select siRNAs based on the length of the duplex region of the RNA. The protein is RNA silencing suppressor p19 of Tomato bushy stunt virus (strain type) (TBSV).